The sequence spans 919 residues: GPI ethanolamine phosphate transferase 1 (919 aa).

Residues 1-8 lie on the Cytoplasmic side of the membrane; it reads MWSRHRLY. Residues 9–29 traverse the membrane as a helical segment; it reads FIVAGVLFHLFYLWSIFDIYF. Topologically, residues 30-456 are lumenal; that stretch reads VSPLVHGMKQ…TTYNWRFIRT (427 aa). Asparagine 138, asparagine 196, asparagine 201, asparagine 285, and asparagine 311 each carry an N-linked (GlcNAc...) asparagine glycan. A helical transmembrane segment spans residues 457-477; the sequence is IVTLGFLGWIVYSFSIFLRLF. At 478 to 487 the chain is on the cytoplasmic side; it reads ILNRDYNSHK. A helical transmembrane segment spans residues 488 to 508; that stretch reads SLLNYFIFGSLTIILNYVLYY. Over 509–510 the chain is Lumenal; that stretch reads QK. A helical transmembrane segment spans residues 511 to 531; that stretch reads APFNYYMYLFFPLIFWSEIFT. Residues 532 to 558 are Cytoplasmic-facing; it reads DRVVLDDGVKEFLKGISIPKRIILVSA. Residues 559–579 form a helical membrane-spanning segment; the sequence is IILVYESIVYAFFDRWIFSLI. The Lumenal portion of the chain corresponds to 580–598; that stretch reads FNMLSFYPLICGYRDWKRN. The helical transmembrane segment at 599–619 threads the bilayer; it reads TLWFITGAAISVFTLLDAVKI. A topological domain (cytoplasmic) is located at residue glutamate 620. Residues 621–641 traverse the membrane as a helical segment; it reads SLTQINIASGLIVLTALSGFL. At 642–653 the chain is on the lumenal side; sequence HLRKQLNSYTTT. The chain crosses the membrane as a helical span at residues 654-674; the sequence is VFICQILLVILMVLATNKSIV. Topologically, residues 675–686 are cytoplasmic; that stretch reads SLQNRTGLPRDA. Residues 687-707 form a helical membrane-spanning segment; that stretch reads QVAGWVILVVSLLLMPLIHYM. Residues 708 to 718 are Lumenal-facing; that stretch reads KPNNNYKVRML. The helical transmembrane segment at 719 to 739 threads the bilayer; it reads IIFLTFAPTFIILTISFESFF. At 740–773 the chain is on the cytoplasmic side; sequence YLVFSAYIVQWIEIESKLKEQTPNTSHYKQLIRV. Residues 774-794 traverse the membrane as a helical segment; that stretch reads TIIGFFLLQNAFFGTGNVASI. Topologically, residues 795–815 are lumenal; sequence SSFSLDSVYRLMPIFDPFPMG. Residues 816 to 836 form a helical membrane-spanning segment; the sequence is ALLVIKLIIPYIILSAGLGIL. The Cytoplasmic portion of the chain corresponds to 837–845; sequence NLKLHIKDY. A helical transmembrane segment spans residues 846–866; it reads TISTLIISTSDILSLNFFYLL. Over 867–882 the chain is Lumenal; that stretch reads KTEGSWLDIGITISNY. Residues 883 to 903 form a helical membrane-spanning segment; that stretch reads CLAILSSLFMLILEIVAHVVL. The Cytoplasmic segment spans residues 904–919; sequence KNVQLSKPVIASKKTN.

This sequence belongs to the PIGG/PIGN/PIGO family. PIGN subfamily.

It localises to the endoplasmic reticulum membrane. It functions in the pathway glycolipid biosynthesis; glycosylphosphatidylinositol-anchor biosynthesis. Functionally, ethanolamine phosphate transferase involved in glycosylphosphatidylinositol-anchor biosynthesis. Transfers ethanolamine phosphate to the first alpha-1,4-linked mannose of the glycosylphosphatidylinositol precursor of GPI-anchor. The chain is GPI ethanolamine phosphate transferase 1 (MCD4) from Kluyveromyces lactis (strain ATCC 8585 / CBS 2359 / DSM 70799 / NBRC 1267 / NRRL Y-1140 / WM37) (Yeast).